Reading from the N-terminus, the 2282-residue chain is Acetyl-CoA carboxylase (2282 aa).

A Biotin carboxylation domain is found at Asn16–Ser515. One can recognise an ATP-grasp domain in the interval Tyr170–Met360. Ala196–Leu253 contacts ATP. Positions 319, 331, and 333 each coordinate Mn(2+). Residue Arg335 is part of the active site. Residues Phe646–Glu720 enclose the Biotinyl-binding domain. Lys687 carries the N6-biotinyllysine modification. Residues Gly1109–Gly1129 show a composition bias toward low complexity. Residues Gly1109–Pro1141 form a disordered region. Residues Pro1495–Ser1851 enclose the CoA carboxyltransferase N-terminal domain. The interval Pro1495–Lys2178 is carboxyltransferase. Residues Arg1761, Lys2068, and Arg2070 each contribute to the CoA site. One can recognise a CoA carboxyltransferase C-terminal domain in the interval Pro1852–Lys2178.

Biotin is required as a cofactor. Requires Mn(2+) as cofactor.

It localises to the cytoplasm. The enzyme catalyses hydrogencarbonate + acetyl-CoA + ATP = malonyl-CoA + ADP + phosphate + H(+). It catalyses the reaction N(6)-biotinyl-L-lysyl-[protein] + hydrogencarbonate + ATP = N(6)-carboxybiotinyl-L-lysyl-[protein] + ADP + phosphate + H(+). It functions in the pathway lipid metabolism; malonyl-CoA biosynthesis; malonyl-CoA from acetyl-CoA: step 1/1. Catalyzes the rate-limiting reaction in the biogenesis of long-chain fatty acids. Carries out three functions: biotin carboxyl carrier protein, biotin carboxylase and carboxyltransferase. In Dictyostelium discoideum (Social amoeba), this protein is Acetyl-CoA carboxylase (accA).